The sequence spans 72 residues: Heat-stable enterotoxin C (72 aa).

An N-terminal signal peptide occupies residues 1 to 19; sequence MKKIVFVLTLMLFSFGTLG. 3 disulfide bridges follow: cysteine 60/cysteine 65, cysteine 61/cysteine 69, and cysteine 64/cysteine 72.

Belongs to the heat-stable enterotoxin family.

It is found in the secreted. Its function is as follows. Toxin which activates the particulate form of guanylate cyclase and increases cyclic GMP levels within the host intestinal epithelial cells. Highly toxic. This Yersinia enterocolitica protein is Heat-stable enterotoxin C (ystC).